The primary structure comprises 275 residues: Prohibitin-1 (275 aa).

The AIM motif lies at 106 to 109 (YQNL).

It belongs to the prohibitin family. As to quaternary structure, the mitochondrial prohibitin complex consists of two subunits (PHB1 and PHB2). The subunits assemble into a membrane-associated ring-shaped supercomplex of approximately 1 mDa. Interacts with ATG24/SNX4; the interaction is direct and plays a role in mitophagy.

It is found in the mitochondrion inner membrane. Prohibitin probably acts as a holdase/unfoldase for the stabilization of newly synthesized mitochondrial proteins. Involved in mitophagy. Required for the switch to necrotrophic growth. The chain is Prohibitin-1 from Colletotrichum higginsianum (strain IMI 349063) (Crucifer anthracnose fungus).